Here is a 532-residue protein sequence, read N- to C-terminus: FRIGIDA-like protein 4a (532 aa).

The tract at residues Lys-406–Ala-432 is disordered.

This sequence belongs to the Frigida family. Expressed in leaves, shoot apex, flowers and during seed development.

This is FRIGIDA-like protein 4a (FRL4A) from Arabidopsis thaliana (Mouse-ear cress).